The sequence spans 206 residues: Thymidylate kinase (206 aa).

10 to 17 contributes to the ATP binding site; sequence GNDGSGKS.

This sequence belongs to the thymidylate kinase family.

It catalyses the reaction dTMP + ATP = dTDP + ADP. Its function is as follows. Phosphorylation of dTMP to form dTDP in both de novo and salvage pathways of dTTP synthesis. This is Thymidylate kinase from Caldicellulosiruptor saccharolyticus (strain ATCC 43494 / DSM 8903 / Tp8T 6331).